The primary structure comprises 724 residues: Actin-related protein 5 (724 aa).

Disordered regions lie at residues 358 to 391 (QSLR…LMNV), 412 to 450 (TTAE…ESYL), and 467 to 488 (KKRL…IGRG). Residues 414–446 (AEGRLRARQKRNEEELEKEKRNQLEEERRRENP) are compositionally biased toward basic and acidic residues. Serine 542 is subject to Phosphoserine.

It belongs to the actin family. ARP5 subfamily. As to quaternary structure, component of the INO80 chromatin-remodeling complex. Interacts with EEN. As to expression, expressed ubiquitously in seedlings, roots, leaves, buds, flowers and siliques.

It localises to the nucleus. Its subcellular location is the nucleoplasm. The protein localises to the cytoplasm. Probable subunit of a chromatin-remodeling complex. Involved in DNA repair. Required for multicellular development of all organs. The protein is Actin-related protein 5 of Arabidopsis thaliana (Mouse-ear cress).